Reading from the N-terminus, the 415-residue chain is Serine hydroxymethyltransferase (415 aa).

(6S)-5,6,7,8-tetrahydrofolate-binding positions include Leu-121 and 125-127 (GHL). The residue at position 229 (Lys-229) is an N6-(pyridoxal phosphate)lysine. (6S)-5,6,7,8-tetrahydrofolate is bound at residue 352–354 (TPF).

This sequence belongs to the SHMT family. Homodimer. Pyridoxal 5'-phosphate serves as cofactor.

Its subcellular location is the cytoplasm. The enzyme catalyses (6R)-5,10-methylene-5,6,7,8-tetrahydrofolate + glycine + H2O = (6S)-5,6,7,8-tetrahydrofolate + L-serine. Its pathway is one-carbon metabolism; tetrahydrofolate interconversion. It participates in amino-acid biosynthesis; glycine biosynthesis; glycine from L-serine: step 1/1. Catalyzes the reversible interconversion of serine and glycine with tetrahydrofolate (THF) serving as the one-carbon carrier. This reaction serves as the major source of one-carbon groups required for the biosynthesis of purines, thymidylate, methionine, and other important biomolecules. Also exhibits THF-independent aldolase activity toward beta-hydroxyamino acids, producing glycine and aldehydes, via a retro-aldol mechanism. The protein is Serine hydroxymethyltransferase of Chromobacterium violaceum (strain ATCC 12472 / DSM 30191 / JCM 1249 / CCUG 213 / NBRC 12614 / NCIMB 9131 / NCTC 9757 / MK).